The sequence spans 119 residues: Methylglyoxal synthase (119 aa).

The MGS-like domain maps to 1 to 119 (MRIALIAHDK…GTADLIIRQF (119 aa)). Substrate is bound by residues His-8, Lys-12, 34-37 (TGTT), and 54-55 (SG). Residue Asp-60 is the Proton donor/acceptor of the active site. His-87 is a substrate binding site.

This sequence belongs to the methylglyoxal synthase family.

It catalyses the reaction dihydroxyacetone phosphate = methylglyoxal + phosphate. Catalyzes the formation of methylglyoxal from dihydroxyacetone phosphate. This is Methylglyoxal synthase from Clostridium botulinum (strain Alaska E43 / Type E3).